The chain runs to 372 residues: Pluviatolide O-methyltransferase (372 aa).

S-adenosyl-L-homocysteine contacts are provided by Gly-214, Asp-237, Asp-257, Met-258, and Lys-271. His-275 serves as the catalytic Proton acceptor. Catalysis depends on residues Asp-306 and Glu-338.

This sequence belongs to the class I-like SAM-binding methyltransferase superfamily. Cation-independent O-methyltransferase family. COMT subfamily. As to quaternary structure, homodimer. As to expression, mostly expressed in stems, and, to a lower extent, in leaves.

The catalysed reaction is (-)-pluviatolide + S-adenosyl-L-methionine = (-)-bursehernin + S-adenosyl-L-homocysteine + H(+). It functions in the pathway aromatic compound metabolism; phenylpropanoid biosynthesis. Its function is as follows. O-methyltransferase involved in the biosynthesis of etoposide, a chemotherapeutic compound of the topoisomerase inhibitor family. Catalyzes the methylation of (-)-pluviatolide to produce (-)-bursehernin. In Sinopodophyllum hexandrum (Himalayan may apple), this protein is Pluviatolide O-methyltransferase.